We begin with the raw amino-acid sequence, 193 residues long: Acyl-homoserine-lactone synthase (193 aa).

It belongs to the autoinducer synthase family.

It catalyses the reaction a fatty acyl-[ACP] + S-adenosyl-L-methionine = an N-acyl-L-homoserine lactone + S-methyl-5'-thioadenosine + holo-[ACP] + H(+). Its function is as follows. Required for the synthesis of OHHL (N-(3-oxohexanoyl)-L-homoserine lactone) also known as VAI or N-(beta-ketocaproyl)homoserine lactone or 3-oxo-N-(tetrahydro-2-oxo-3-furanyl)-hexanamide, an autoinducer molecule which binds to LuxR and thus acts in bioluminescence regulation. In Aliivibrio fischeri (strain ATCC 700601 / ES114) (Vibrio fischeri), this protein is Acyl-homoserine-lactone synthase (luxI).